The sequence spans 196 residues: V-type proton ATPase proteolipid subunit (196 aa).

The Lumenal segment spans residues 1-25 (MFQLLSFLLSGEATAVERIITDACP). The helical transmembrane segment at 26 to 46 (VYAPFFGAMGVTAALVFTVMG) threads the bilayer. Topologically, residues 47–72 (AAYGTAKASVGISNMGVMKPDLVIKA) are cytoplasmic. Residues 73–93 (FIPVIFAGVIAIYGLIICVIL) form a helical membrane-spanning segment. The Lumenal segment spans residues 94 to 111 (VGGIKPNANYTLMKSFTD). The helical transmembrane segment at 112–132 (LGAGLTVGLCGLAAGMAIGIV) threads the bilayer. Residues 133–150 (GDSGVRAFGQQPKLYVIM) lie on the Cytoplasmic side of the membrane. A helical membrane pass occupies residues 151 to 171 (MLILIFSEALGLYGLIIGILL). Residues 172 to 196 (SSVSDTYCPGQALVPLNSGNVIGKN) lie on the Lumenal side of the membrane.

It belongs to the V-ATPase proteolipid subunit family. In terms of assembly, V-ATPase is a heteromultimeric enzyme composed of a peripheral catalytic V1 complex (main components: subunits A, B, C, D, E, and F) attached to an integral membrane V0 proton pore complex (main component: the proteolipid protein; which is present as a hexamer that forms the proton-conducting pore).

It localises to the vacuole membrane. Functionally, proton-conducting pore forming subunit of the membrane integral V0 complex of vacuolar ATPase. V-ATPase is responsible for acidifying a variety of intracellular compartments in eukaryotic cells. This chain is V-type proton ATPase proteolipid subunit (vatP), found in Dictyostelium discoideum (Social amoeba).